We begin with the raw amino-acid sequence, 98 residues long: Transcription elongation factor A protein-like 7 (98 aa).

Basic and acidic residues predominate over residues 1-22; sequence MQKSCNEKEGKPKGSEAKREDE. The interval 1–33 is disordered; sequence MQKSCNEKEGKPKGSEAKREDEQPCGALEGQRL. Residues 59–89 adopt a coiled-coil conformation; sequence GEEMTGEEEEMERCLEEIRSLRKKFRALHSN.

This sequence belongs to the TFS-II family. TFA subfamily.

It is found in the nucleus. In terms of biological role, plays a role in the negative regulation of NF-kappa-B signaling at the basal level by modulating transcriptional activity of NF-kappa-B on its target gene promoters. Associates with cyclin D1 promoter containing Myc E-box sequence and transcriptionally represses cyclin D1 expression. Regulates telomerase reverse transcriptase expression and telomerase activity in both ALT (alternative lengthening of telomeres)and telomerase-positive cell lines. This is Transcription elongation factor A protein-like 7 (Tceal7) from Mus musculus (Mouse).